The following is a 519-amino-acid chain: Iroquois-class homeodomain protein IRX-4 (519 aa).

A DNA-binding region (homeobox; TALE-type) is located at residues 143–204; that stretch reads GTRRKNATRE…NARRRLKKEN (62 aa). Residues 204–298 are disordered; it reads NKMTWPPRNK…VPAAPDGPVK (95 aa). Over residues 213-222 the composition is skewed to basic and acidic residues; the sequence is KCADEKRPYA. 2 stretches are compositionally biased toward acidic residues: residues 223–235 and 257–267; these read EGEE…EEAR and LSDLDDFDPLE.

The protein belongs to the TALE/IRO homeobox family. As to quaternary structure, interacts with the vitamin D receptor VDR but doesn't affect its transactivation activity. In terms of tissue distribution, predominantly expressed in cardiac ventricles.

Its subcellular location is the nucleus. Functionally, likely to be an important mediator of ventricular differentiation during cardiac development. The chain is Iroquois-class homeodomain protein IRX-4 (IRX4) from Homo sapiens (Human).